Reading from the N-terminus, the 255-residue chain is BPI fold-containing family A member 1 (255 aa).

An N-terminal signal peptide occupies residues 1–19 (MFHIGSLVVLCGLLAPTTA). Residues 87 to 92 (LLGSLL) are important for surfactant activity and antibacterial properties. 3 N-linked (GlcNAc...) asparagine glycosylation sites follow: Asn-157, Asn-178, and Asn-205. Cys-179 and Cys-223 form a disulfide bridge.

Belongs to the BPI/LBP/Plunc superfamily. Plunc family. Monomer. Interacts (via N-terminus) with SCNN1B, a subunit of the heterotrimeric epithelial sodium channel (ENaC); this inhibits proteolytic activation of ENaC. In terms of tissue distribution, expressed in trachea, and at lower levels in nasal epithelium.

It is found in the secreted. Its function is as follows. Lipid-binding protein which shows high specificity for the surfactant phospholipid dipalmitoylphosphatidylcholine (DPPC). Plays a role in the innate immune responses of the upper airways. Reduces the surface tension in secretions from airway epithelia and inhibits the formation of biofilm by pathogenic Gram-negative bacteria, such as P.aeruginosa and K.pneumoniae. Negatively regulates proteolytic cleavage of SCNN1G, an event that is required for activation of the epithelial sodium channel (ENaC), and thereby contributes to airway surface liquid homeostasis and proper clearance of mucus. Plays a role in the airway inflammatory response after exposure to irritants. May attract macrophages and neutrophils. The polypeptide is BPI fold-containing family A member 1 (BPIFA1) (Bos taurus (Bovine)).